The chain runs to 487 residues: L-tartrate/succinate antiporter (487 aa).

14 helical membrane passes run Tyr10 to Glu30, Thr33 to Pro53, Gly54 to Phe74, Trp93 to Gly113, Thr137 to Ser157, Ile189 to Leu209, Phe236 to Val256, Leu292 to Val312, Gly313 to Ser333, Val340 to Ile360, Ser370 to Leu390, Phe393 to Leu413, Ile418 to Thr438, and Ile465 to Val485.

Belongs to the SLC13A/DASS transporter (TC 2.A.47) family. DIT1 subfamily.

The protein localises to the cell inner membrane. It catalyses the reaction (2R,3R)-tartrate(out) + succinate(in) = (2R,3R)-tartrate(in) + succinate(out). In terms of biological role, catalyzes the uptake of tartrate in exchange for intracellular succinate. Essential for anaerobic L-tartrate fermentation. This Escherichia coli O157:H7 protein is L-tartrate/succinate antiporter (ttdT).